Here is a 132-residue protein sequence, read N- to C-terminus: Intraflagellar transport protein 20 homolog A (132 aa).

A coiled-coil region spans residues 87–112 (EAQQQQLYALIAEKKMQLERYRIEYD).

The protein localises to the golgi apparatus. Its subcellular location is the cis-Golgi network. The protein resides in the cytoplasm. It localises to the cytoskeleton. It is found in the microtubule organizing center. The protein localises to the centrosome. Its subcellular location is the centriole. The protein resides in the cell projection. It localises to the cilium. In terms of biological role, involved in ciliary process assembly. May play a role in the trafficking of ciliary membrane proteins from the Golgi complex to the cilium. Regulates the platelet-derived growth factor receptor-alpha (PDGFRA) signaling pathway. Plays an important role in spermatogenesis, particularly spermiogenesis, when germ cells form flagella. The protein is Intraflagellar transport protein 20 homolog A (ift20-a) of Xenopus laevis (African clawed frog).